The chain runs to 265 residues: MTGSVWAIVPAAGRGTRFGGAVPKQYLHAAGQPLMAYTLAALAAHPAVAGIVVAIAPDDADWPGWTAVHAKPLLTCVGGATRAASVLAGLLALPDGVRADDFVLVHDAARPNLALADLDRLLEIGRGDPVGAILAAPVRDTLKRAGDDGGIDGTEPRQRLWRALTPQLFRRHQLIRGLTEASAAGVDVTDEAMAIERLGLRPLLVEGAEDNFKVTTPADLARFEFELANRDRGGASREAERSAMPSAATSVFSGARSAASGSEEV.

The segment covering 231 to 241 (DRGGASREAER) has biased composition (basic and acidic residues). A disordered region spans residues 231–265 (DRGGASREAERSAMPSAATSVFSGARSAASGSEEV). Residues 253–265 (SGARSAASGSEEV) are compositionally biased toward low complexity.

Belongs to the IspD/TarI cytidylyltransferase family. IspD subfamily.

The enzyme catalyses 2-C-methyl-D-erythritol 4-phosphate + CTP + H(+) = 4-CDP-2-C-methyl-D-erythritol + diphosphate. It participates in isoprenoid biosynthesis; isopentenyl diphosphate biosynthesis via DXP pathway; isopentenyl diphosphate from 1-deoxy-D-xylulose 5-phosphate: step 2/6. Catalyzes the formation of 4-diphosphocytidyl-2-C-methyl-D-erythritol from CTP and 2-C-methyl-D-erythritol 4-phosphate (MEP). In Xanthomonas campestris pv. campestris (strain B100), this protein is 2-C-methyl-D-erythritol 4-phosphate cytidylyltransferase.